The sequence spans 380 residues: N-acetylaspartylglutamate synthase A (380 aa).

The region spanning 115 to 300 (FQELAGHGVP…VGAIIADYAM (186 aa)) is the ATP-grasp domain. Residues Lys-154, 189 to 199 (QKYVKESHGKD), and Arg-215 contribute to the ATP site. Residues Asp-260, Glu-273, and Asn-275 each contribute to the Mg(2+) site. Residues Asp-260, Glu-273, and Asn-275 each contribute to the Mn(2+) site. A Phosphoserine modification is found at Ser-319. A disordered region spans residues 345–370 (GSTSSESEPELGEARDSSVKTMGAPP).

Belongs to the RimK family. It depends on Mg(2+) as a cofactor. Mn(2+) is required as a cofactor. Highly expressed in spinal cord and brain.

The protein localises to the cytoplasm. It carries out the reaction N-acetyl-L-aspartate + L-glutamate + ATP = N-acetyl-L-aspartyl-L-glutamate + ADP + phosphate + H(+). The enzyme catalyses N-acetyl-L-aspartate + 2 L-glutamate + 2 ATP = N-acetyl-L-aspartyl-L-glutamyl-L-glutamate + 2 ADP + 2 phosphate + 2 H(+). Catalyzes the synthesis of N-acetyl-L-aspartyl-L-glutamate (NAAG) and N-acetyl-L-aspartyl-L-glutamyl-L-glutamate. In Mus musculus (Mouse), this protein is N-acetylaspartylglutamate synthase A (Rimkla).